Reading from the N-terminus, the 631-residue chain is DDB1- and CUL4-associated factor 8-like protein 2 (631 aa).

2 disordered regions span residues 1–91 and 108–163; these read MSHQ…EDFE and EEET…HEQY. Residues 44–54 show a composition bias toward polar residues; sequence SELSVTVTGDG. 2 stretches are compositionally biased toward acidic residues: residues 77 to 88 and 108 to 147; these read SASEDIELESLE and EEET…EEEE. WD repeat units follow at residues 226–265, 269–310, 316–356, 364–404, 420–459, 467–507, and 511–550; these read DHVG…PVLN, GHTN…YFNN, QHRG…PASK, DKKV…KKEN, DFPT…GAQY, RNNT…IIQF, and SREG…ATEL. The tract at residues 594-631 is disordered; sequence QDWRSGEAEFPDEESDESSSTSETSEEEVQDRVQCMPS.

It belongs to the WD repeat DCAF8 family.

This Homo sapiens (Human) protein is DDB1- and CUL4-associated factor 8-like protein 2 (DCAF8L2).